Consider the following 87-residue polypeptide: Cell division topological specificity factor (87 aa).

This sequence belongs to the MinE family.

In terms of biological role, prevents the cell division inhibition by proteins MinC and MinD at internal division sites while permitting inhibition at polar sites. This ensures cell division at the proper site by restricting the formation of a division septum at the midpoint of the long axis of the cell. In Acidiphilium cryptum (strain JF-5), this protein is Cell division topological specificity factor.